Here is a 306-residue protein sequence, read N- to C-terminus: Ribonuclease HIII (306 aa).

The RNase H type-2 domain maps to 87–302 (WSVVGSDEVG…TKKAEALAKK (216 aa)). Positions 93, 94, and 196 each coordinate a divalent metal cation.

It belongs to the RNase HII family. RnhC subfamily. Mn(2+) is required as a cofactor. Mg(2+) serves as cofactor.

Its subcellular location is the cytoplasm. The catalysed reaction is Endonucleolytic cleavage to 5'-phosphomonoester.. Functionally, endonuclease that specifically degrades the RNA of RNA-DNA hybrids. This Exiguobacterium sibiricum (strain DSM 17290 / CCUG 55495 / CIP 109462 / JCM 13490 / 255-15) protein is Ribonuclease HIII.